Here is a 414-residue protein sequence, read N- to C-terminus: Eukaryotic initiation factor 4A-3 (414 aa).

A Q motif motif is present at residues 41–69; sequence ESFDDMGLQENLLRGIYAYGFEKPSAIQQ. The 171-residue stretch at 72-242 folds into the Helicase ATP-binding domain; the sequence is IVPFCKGLDV…RKFMNKPVRI (171 aa). Residue 85 to 92 participates in ATP binding; the sequence is AQSGTGKT. Residues 190–193 carry the DEAD box motif; that stretch reads DEAD. A Helicase C-terminal domain is found at 253–414; that stretch reads GIKQFYVNVE…ELPANVADLL (162 aa).

It belongs to the DEAD box helicase family. eIF4A subfamily. In terms of assembly, eIF4F is a multi-subunit complex, the composition of which varies with external and internal environmental conditions. It is composed of at least EIF4A, EIF4E and EIF4G. Interacts with DRM2 (via UBA domains).

It is found in the cytoplasm. The protein resides in the nucleus. It catalyses the reaction ATP + H2O = ADP + phosphate + H(+). In terms of biological role, ATP-dependent RNA helicase which is a subunit of the eIF4F complex involved in cap recognition and is required for mRNA binding to ribosome. In the current model of translation initiation, eIF4A unwinds RNA secondary structures in the 5'-UTR of mRNAs which is necessary to allow efficient binding of the small ribosomal subunit, and subsequent scanning for the initiator codon. This chain is Eukaryotic initiation factor 4A-3, found in Oryza sativa subsp. japonica (Rice).